Consider the following 430-residue polypeptide: Histidine--tRNA ligase (430 aa).

It belongs to the class-II aminoacyl-tRNA synthetase family. As to quaternary structure, homodimer.

The protein localises to the cytoplasm. The catalysed reaction is tRNA(His) + L-histidine + ATP = L-histidyl-tRNA(His) + AMP + diphosphate + H(+). In Acinetobacter baylyi (strain ATCC 33305 / BD413 / ADP1), this protein is Histidine--tRNA ligase.